A 657-amino-acid chain; its full sequence is MRFDNASIVVYYCLIQMNIINLGILAHIDAGKTSVTENLLFASGATEKCGRVDNGDTITDSMDIEKRRGITVRASTTSIIWNGVKCNIIDTPGHMDFIAEVERTFKMLDGAVLILSAKEGIQAQTKLLFNTLQKLQIPTIIFINKIDRDGVNLERLYLDIKTNLSQDVLFMQTVVDGLVYPICSQTYIKEEYKEFVCNHDDNILERYLADSEISPADYWNTIIDLVAKAKVYPVLHGSAMFNIGINELLDAISSFILPPESVSNRLSAYLYKIEHDPKGHKRSFLKIIDGSLRLRDIVRINDSEKFIKIKNLKTIYQGREINVDEVGANDIAIVEDMEDFRIGDYLGTKPCLIQGLSHQHPALKSSVRPDRSEERSKVISALNTLWIEDPSLSFSINSYSDELEISLYGLTQKEIIQTLLEERFSVKVHFDEIKTIYKERPVKKVNKIIQIEVPPNPYWATIGLTLEPLPLGTGLQIESDISYGYLNHSFQNAVFEGIRMSCQSGLHGWEVTDLKVTFTQAEYYSPVSTPADFRQLTPYVFRLALQQSGVDILEPMLYFELQIPQAASSKAITDLQKMMSEIEDISCNNEWCHIKGKVPLNTSKDYASEVSSYTKGLGVFMVKPCGYQITKGDYSDNIRMNEKDKLLFMFQKSMSSK.

The tr-type G domain maps to 17–260; sequence MNIINLGILA…AISSFILPPE (244 aa). GTP is bound by residues 26-33, 90-94, and 144-147; these read AHIDAGKT, DTPGH, and NKID.

Belongs to the TRAFAC class translation factor GTPase superfamily. Classic translation factor GTPase family. TetM/TetO subfamily.

Abolishes the inhibitory effect of tetracycline on protein synthesis by non-covalently modifying ribosomes. Confers mild resistance to tetracycline when expressed in E.coli. In Bacteroides fragilis, this protein is Tetracycline resistance protein TetQ (tetQ).